A 153-amino-acid chain; its full sequence is Small ribosomal subunit protein bS16 (153 aa).

A disordered region spans residues 114–153; the sequence is ENEPVGEAITPKKKKAKAEDAEAAADAPAEAAAESEAADK. The segment covering 137–153 has biased composition (low complexity); it reads AADAPAEAAAESEAADK.

This sequence belongs to the bacterial ribosomal protein bS16 family.

The sequence is that of Small ribosomal subunit protein bS16 from Rhodococcus opacus (strain B4).